The sequence spans 617 residues: Neopullulanase SusA (617 aa).

A signal peptide spans 1 to 22; the sequence is MKRNLLFIILLLLLPGLHQVFA. 5 residues coordinate Ca(2+): N138, N143, D144, G164, and D166. Active-site residues include D331 and E360.

Belongs to the glycosyl hydrolase 13 family. It depends on Ca(2+) as a cofactor.

It localises to the periplasm. It carries out the reaction Hydrolysis of pullulan to panose (6-alpha-D-glucosylmaltose).. It participates in glycan degradation; starch degradation. Neopullulanase that cleaves 1,4-alpha-glucosidic linkages in starch to produce disaccharides or trisaccharides in starch degradation. The polypeptide is Neopullulanase SusA (susA) (Bacteroides thetaiotaomicron (strain ATCC 29148 / DSM 2079 / JCM 5827 / CCUG 10774 / NCTC 10582 / VPI-5482 / E50)).